The primary structure comprises 462 residues: Argininosuccinate lyase (462 aa).

Belongs to the lyase 1 family. Argininosuccinate lyase subfamily.

It localises to the cytoplasm. The catalysed reaction is 2-(N(omega)-L-arginino)succinate = fumarate + L-arginine. It participates in amino-acid biosynthesis; L-arginine biosynthesis; L-arginine from L-ornithine and carbamoyl phosphate: step 3/3. This Gloeothece citriformis (strain PCC 7424) (Cyanothece sp. (strain PCC 7424)) protein is Argininosuccinate lyase.